The primary structure comprises 433 residues: Malate synthase (433 aa).

16–17 lines the acetyl-CoA pocket; it reads TS. Position 52 (D52) interacts with Mg(2+). Residue R84 participates in acetyl-CoA binding. Residues R84, E158, and 191 to 192 contribute to the glyoxylate site; that span reads VD. Mg(2+) contacts are provided by E158 and D192. Residues R236 and L259 each coordinate acetyl-CoA. The active-site Proton acceptor is the D388.

The protein belongs to the HpcH/HpaI aldolase family. In terms of assembly, homotrimer and homohexamer in equilibrium. Requires Mg(2+) as cofactor.

The protein resides in the cytoplasm. It carries out the reaction glyoxylate + acetyl-CoA + H2O = (S)-malate + CoA + H(+). Its pathway is carbohydrate metabolism; glyoxylate cycle; (S)-malate from isocitrate: step 2/2. Functionally, involved in the glyoxylate cycle which synthesizes precursors for carbohydrates from C2 compounds such as acetate. Catalyzes the Claisen condensation between acetyl-coenzyme A (acetyl-CoA) and glyoxylate to form the malyl-CoA intermediate that is subsequently hydrolyzed to produce malate and CoA. The polypeptide is Malate synthase (aceB) (Haloferax volcanii (strain ATCC 29605 / DSM 3757 / JCM 8879 / NBRC 14742 / NCIMB 2012 / VKM B-1768 / DS2) (Halobacterium volcanii)).